Consider the following 917-residue polypeptide: Protein Ami (917 aa).

Positions 1–30 (MKKLVKSAVVFAGLVFIGTSATMITEKASA) are cleaved as a signal peptide. The 128-residue stretch at 118–245 (KPEGIVIHET…YLGGTTHTDP (128 aa)) folds into the N-acetylmuramoyl-L-alanine amidase domain. Residues 262–917 (LINEKYKAMQ…KAANLSAKKQ (656 aa)) form a GW repeat region, necessary and sufficient for cell surface attachment region. 8 GW domains span residues 279–358 (YDKA…TFYT), 361–435 (MEKT…TTKY), 440–519 (YDKA…TFYT), 522–596 (MEKN…ATQY), 601–679 (YDKA…TFYT), 682–756 (MEKT…TTKY), 761–840 (YDKA…TFYT), and 843–917 (MEKN…AKKQ).

The protein in the N-terminal section; belongs to the N-acetylmuramoyl-L-alanine amidase 2 family.

The protein localises to the cell surface. It is found in the cell membrane. Functionally, a bacteriolysin able to lyse both L.monocytogenes and S.aureus. This is Protein Ami from Listeria monocytogenes serotype 1/2a (strain EGD / Mackaness).